Reading from the N-terminus, the 645-residue chain is MALASNPRRRLHEVRVQKYVVIAVTWRGAQPMSQRARPSRVVRAAAWGMFARCHPGAAAGWHRCTDLVTRSSARPAYTVASQSFSQGLVEDAPLQNPNTLTYNRVYSKVGNTRILQAEPAVLNFGGYELGKVYSQVLRIRNVRASGTRFHIIPPSTPFFKATCPAKKGLLAPGMTEEVAVEFCPTQYRYYYDCVRVHCEEENLLIPLHAYPVANEALFPTRVDFGRVALGQEVVRSHTLECKVPVDFEYEIVEVKPNPAFRVEPARGVVPGRGRVTVDMWFCPLALTTEEAVIETEVAGVYVPDTMLLSAAEVGLRTKDVRGAIEARKAAAAEQQAALEKGALFRLQLALAEEAARKVALGTAPHSGQQLLTAEQPELEAGGAVHQPSAPVGSSSSGGGGGSDPAFKPEHKRTRVLDKFMRAVWRVVTHQRLQRRLERIKEVLAHLGYDKQRLAEEAANPVLLVSESDRPGTAPTKYLRPEMVRVRPLPLYRDVLFQVHHATDLSHYTDFDELAPFTSKVRERLVPSGLVPPLSDYPTMPDACKNMPYITLEIGNRYGDDRVYGAPDPSYSPYGSLDVDYAVQPRQYDVYDSARHEAVASGGVRSLRGGPGLSDSWLVRQICPAVPTDEQLAKCGGTGIVNTIPN.

Residues 381 to 408 form a disordered region; that stretch reads GGAVHQPSAPVGSSSSGGGGGSDPAFKP. Positions 428–435 are interaction with calmodulin; sequence THQRLQRR.

This sequence belongs to the PCDP1 family. Interacts with calmodulin; calcium-dependent. Part of the PDCP1 complex composed of CFAP46, CFAP54, CFAP74 and CFAP221; the PDCP1 complex binds calmodulin.

It is found in the cytoplasm. Its subcellular location is the cytoskeleton. It localises to the cilium axoneme. Functionally, may play a role in cilium morphogenesis. In Chlamydomonas reinhardtii (Chlamydomonas smithii), this protein is Cilia- and flagella-associated protein 221 homolog.